We begin with the raw amino-acid sequence, 177 residues long: Cytochrome c oxidase assembly protein CtaG (177 aa).

Residues 1-8 lie on the Cytoplasmic side of the membrane; the sequence is MTQKAKNT. Residues 9-29 traverse the membrane as a helical; Signal-anchor for type II membrane protein segment; that stretch reads IYLLILIILSMLCLVYASVPL. Topologically, residues 30 to 177 are periplasmic; it reads YSIFCKVTGY…TFFKYKETTK (148 aa).

Belongs to the COX11/CtaG family.

The protein resides in the cell inner membrane. Functionally, exerts its effect at some terminal stage of cytochrome c oxidase synthesis, probably by being involved in the insertion of the copper B into subunit I. The polypeptide is Cytochrome c oxidase assembly protein CtaG (Ehrlichia ruminantium (strain Gardel)).